Here is a 414-residue protein sequence, read N- to C-terminus: Glucose-1-phosphate adenylyltransferase (414 aa).

Residues Y99, G164, 181–182 (EK), and S199 each bind alpha-D-glucose 1-phosphate.

The protein belongs to the bacterial/plant glucose-1-phosphate adenylyltransferase family. In terms of assembly, homotetramer.

The catalysed reaction is alpha-D-glucose 1-phosphate + ATP + H(+) = ADP-alpha-D-glucose + diphosphate. It participates in glycan biosynthesis; glycogen biosynthesis. Involved in the biosynthesis of ADP-glucose, a building block required for the elongation reactions to produce glycogen. Catalyzes the reaction between ATP and alpha-D-glucose 1-phosphate (G1P) to produce pyrophosphate and ADP-Glc. This chain is Glucose-1-phosphate adenylyltransferase, found in Bifidobacterium adolescentis (strain ATCC 15703 / DSM 20083 / NCTC 11814 / E194a).